Consider the following 161-residue polypeptide: Phosphopantetheine adenylyltransferase (161 aa).

Residue Thr-9 coordinates substrate. Residues 9-10 (TF) and His-17 each bind ATP. Residues Lys-41, Leu-73, and Arg-87 each coordinate substrate. ATP contacts are provided by residues 88 to 90 (GLR), Glu-98, and 123 to 129 (YQFISGT).

It belongs to the bacterial CoaD family. Homohexamer. It depends on Mg(2+) as a cofactor.

The protein resides in the cytoplasm. It catalyses the reaction (R)-4'-phosphopantetheine + ATP + H(+) = 3'-dephospho-CoA + diphosphate. Its pathway is cofactor biosynthesis; coenzyme A biosynthesis; CoA from (R)-pantothenate: step 4/5. Its function is as follows. Reversibly transfers an adenylyl group from ATP to 4'-phosphopantetheine, yielding dephospho-CoA (dPCoA) and pyrophosphate. In Cupriavidus taiwanensis (strain DSM 17343 / BCRC 17206 / CCUG 44338 / CIP 107171 / LMG 19424 / R1) (Ralstonia taiwanensis (strain LMG 19424)), this protein is Phosphopantetheine adenylyltransferase.